Here is an 80-residue protein sequence, read N- to C-terminus: Large ribosomal subunit protein uL24 (80 aa).

It belongs to the universal ribosomal protein uL24 family. As to quaternary structure, part of the 50S ribosomal subunit.

Its function is as follows. One of two assembly initiator proteins, it binds directly to the 5'-end of the 23S rRNA, where it nucleates assembly of the 50S subunit. Functionally, one of the proteins that surrounds the polypeptide exit tunnel on the outside of the subunit. In Chlorobium phaeobacteroides (strain BS1), this protein is Large ribosomal subunit protein uL24.